Here is a 484-residue protein sequence, read N- to C-terminus: MLIFELSKTGRQAKAQIPRAVSKNYSIPEEFQRKSPPRLPACSELQVVRHFTCLSQKNFSIDTNFYPLGSCTMKYNPRGVHKAASLPGFINRHPLAMDNESQGFLETLYKLQNYISEITGMPGVSLTPMAGSQGEFAGVAMIKAYHQSRGDTARDEILIPDAAHGTNPASAVMCGFKVVEIATAPDGDIDLDELKRKVGPRTAGIMLTNPSTLGLFMRQIKEIASLVHQAGGLLYYDGANLNAILGKVRPGDMGFDVMHLNLHKTFATPHGGGGPGAGPVAVGKRLIPYMPLPVVKKTDSGYHWATRQDYPQSIGRLSCFMGNAGILLRAYFYMLVLGKEGLLRVSEFATLNANYLLKELTKVGYTAAYPDRRASHEFILTLNSEKKNYDVTAMDFAKRLLDYGVHAPTTYFPLLVPECLLIEPPETESKEELDAFVAVMKIIREEASKQPDILKAAPHTLPVKRLDDVKAARELDLNYFATHE.

K264 is subject to N6-(pyridoxal phosphate)lysine.

The protein belongs to the GcvP family. C-terminal subunit subfamily. The glycine cleavage system is composed of four proteins: P, T, L and H. In this organism, the P 'protein' is a heterodimer of two subunits. Pyridoxal 5'-phosphate serves as cofactor.

It catalyses the reaction N(6)-[(R)-lipoyl]-L-lysyl-[glycine-cleavage complex H protein] + glycine + H(+) = N(6)-[(R)-S(8)-aminomethyldihydrolipoyl]-L-lysyl-[glycine-cleavage complex H protein] + CO2. Functionally, the glycine cleavage system catalyzes the degradation of glycine. The P protein binds the alpha-amino group of glycine through its pyridoxal phosphate cofactor; CO(2) is released and the remaining methylamine moiety is then transferred to the lipoamide cofactor of the H protein. The polypeptide is Probable glycine dehydrogenase (decarboxylating) subunit 2 (Legionella pneumophila subsp. pneumophila (strain Philadelphia 1 / ATCC 33152 / DSM 7513)).